We begin with the raw amino-acid sequence, 171 residues long: MDRAEKKECVESLSEVFKSTSVVVVAHYSGLTVAQMQNLRKQMRAAGAAVQVAKNRLVKIALEGSEVASIADLMRGPTLIAYSADPVAAAKAAVAFAKDNDKLVILGGAMGKTALNADAVKSLATMPSLDELRAKLVGLIQAPATKLAQLVNAPAGKLARVISAYAEKDAA.

It belongs to the universal ribosomal protein uL10 family. As to quaternary structure, part of the ribosomal stalk of the 50S ribosomal subunit. The N-terminus interacts with L11 and the large rRNA to form the base of the stalk. The C-terminus forms an elongated spine to which L12 dimers bind in a sequential fashion forming a multimeric L10(L12)X complex.

Forms part of the ribosomal stalk, playing a central role in the interaction of the ribosome with GTP-bound translation factors. The protein is Large ribosomal subunit protein uL10 of Methylocella silvestris (strain DSM 15510 / CIP 108128 / LMG 27833 / NCIMB 13906 / BL2).